A 116-amino-acid polypeptide reads, in one-letter code: NADPH-dependent 7-cyano-7-deazaguanine reductase (116 aa).

Cysteine 31 serves as the catalytic Thioimide intermediate. The Proton donor role is filled by aspartate 38. Substrate-binding positions include 53–55 (VEL) and 72–73 (YE).

It belongs to the GTP cyclohydrolase I family. QueF type 1 subfamily.

The protein localises to the cytoplasm. It carries out the reaction 7-aminomethyl-7-carbaguanine + 2 NADP(+) = 7-cyano-7-deazaguanine + 2 NADPH + 3 H(+). It functions in the pathway tRNA modification; tRNA-queuosine biosynthesis. Functionally, catalyzes the NADPH-dependent reduction of 7-cyano-7-deazaguanine (preQ0) to 7-aminomethyl-7-deazaguanine (preQ1). In Chlorobium chlorochromatii (strain CaD3), this protein is NADPH-dependent 7-cyano-7-deazaguanine reductase.